We begin with the raw amino-acid sequence, 367 residues long: Peptide chain release factor 2 (367 aa).

At Gln254 the chain carries N5-methylglutamine.

It belongs to the prokaryotic/mitochondrial release factor family. Post-translationally, methylated by PrmC. Methylation increases the termination efficiency of RF2.

Its subcellular location is the cytoplasm. In terms of biological role, peptide chain release factor 2 directs the termination of translation in response to the peptide chain termination codons UGA and UAA. The chain is Peptide chain release factor 2 from Janthinobacterium sp. (strain Marseille) (Minibacterium massiliensis).